The following is a 342-amino-acid chain: Putative anthocyanidin reductase (342 aa).

NADP(+) is bound by residues Arg-44, Lys-51, 71–72 (EL), 91–93 (VAT), Tyr-172, Lys-176, 199–202 (PVLV), and Ser-214. The active-site Proton donor is Lys-176.

Belongs to the NAD(P)-dependent epimerase/dehydratase family. Dihydroflavonol-4-reductase subfamily. As to expression, highly expressed in leaves and weakly in stems. Not expressed in roots.

It participates in secondary metabolite biosynthesis; flavonoid biosynthesis. In Ginkgo biloba (Ginkgo), this protein is Putative anthocyanidin reductase.